The sequence spans 155 residues: NADH-ubiquinone oxidoreductase chain 6 (155 aa).

A run of 4 helical transmembrane segments spans residues Met1–Phe21, Trp42–Val62, Phe71–Val91, and Leu121–Ile141.

This sequence belongs to the complex I subunit 6 family.

The protein resides in the mitochondrion membrane. The catalysed reaction is a ubiquinone + NADH + 5 H(+)(in) = a ubiquinol + NAD(+) + 4 H(+)(out). Its function is as follows. Core subunit of the mitochondrial membrane respiratory chain NADH dehydrogenase (Complex I) that is believed to belong to the minimal assembly required for catalysis. Complex I functions in the transfer of electrons from NADH to the respiratory chain. The immediate electron acceptor for the enzyme is believed to be ubiquinone. This Artemia franciscana (Brine shrimp) protein is NADH-ubiquinone oxidoreductase chain 6 (ND6).